The primary structure comprises 728 residues: Procollagen-lysine,2-oxoglutarate 5-dioxygenase 1 (728 aa).

An N-terminal signal peptide occupies residues 1 to 18 (MRSLLLLASLAWLLLAQA). N-linked (GlcNAc...) asparagine glycans are attached at residues N177, N198, and N539. The Fe2OG dioxygenase domain occupies 637–728 (QFDLAFVVRY…RYIAVSFVDP (92 aa)). Positions 657 and 659 each coordinate Fe cation. N-linked (GlcNAc...) asparagine glycosylation occurs at N687. Residue H709 coordinates Fe cation. Residue R719 is part of the active site.

In terms of assembly, homodimer. Identified in a complex with P3H3 and P3H4. Fe(2+) serves as cofactor. Requires L-ascorbate as cofactor.

It localises to the rough endoplasmic reticulum membrane. It catalyses the reaction L-lysyl-[collagen] + 2-oxoglutarate + O2 = (5R)-5-hydroxy-L-lysyl-[collagen] + succinate + CO2. Its function is as follows. Part of a complex composed of PLOD1, P3H3 and P3H4 that catalyzes hydroxylation of lysine residues in collagen alpha chains and is required for normal assembly and cross-linkling of collagen fibrils. Forms hydroxylysine residues in -Xaa-Lys-Gly- sequences in collagens. These hydroxylysines serve as sites of attachment for carbohydrate units and are essential for the stability of the intermolecular collagen cross-links. The chain is Procollagen-lysine,2-oxoglutarate 5-dioxygenase 1 (Plod1) from Rattus norvegicus (Rat).